A 213-amino-acid chain; its full sequence is MKFVILVLCLSFVNGYGIKRNVQEHDLKDSHEHPTMTWELLEKFVGNTLYITTPQVLALPLGAQIYCDEIEGFQCSWPGYKNYAHDHTDFHFNPSNPFYSFVDTFYVSLGDSADKIYLRVISATSREKMLNIGCHTSFSVNLPIGTQIYHDKDMKLLVEGRHLECAHRIYFVKYCPYHTHGYCFDDKLKVYDLKRVKSRKDFEKISQYQKSEL.

An N-terminal signal peptide occupies residues 1–15; the sequence is MKFVILVLCLSFVNG.

The protein is Non-structural protein 7b of Canis lupus familiaris (Dog).